Here is an 878-residue protein sequence, read N- to C-terminus: Aminopeptidase M1-A (878 aa).

Positions valine 105–valine 212 are required for membrane association. Residues glutamate 145 and glycine 278–asparagine 282 contribute to the substrate site. A Zn(2+)-binding site is contributed by histidine 314. The active-site Proton acceptor is glutamate 315. Zn(2+) is bound by residues histidine 318 and glutamate 337. The Dileucine internalization motif motif lies at leucine 727–leucine 728.

This sequence belongs to the peptidase M1 family. As to quaternary structure, homodimer. Zn(2+) serves as cofactor.

The protein resides in the membrane. It is found in the microsome membrane. Its subcellular location is the cytoplasm. The enzyme catalyses Release of an N-terminal amino acid, Xaa-|-Yaa- from a peptide, amide or arylamide. Xaa is preferably Ala, but may be most amino acids including Pro (slow action). When a terminal hydrophobic residue is followed by a prolyl residue, the two may be released as an intact Xaa-Pro dipeptide.. The protein is Aminopeptidase M1-A of Oryza sativa subsp. japonica (Rice).